Here is a 436-residue protein sequence, read N- to C-terminus: Drebrin-like protein (436 aa).

The region spanning 2–133 is the ADF-H domain; the sequence is AVNLSRNGPA…EPECIMEKVA (132 aa). Thr26 bears the Phosphothreonine mark. Ser160 is modified (phosphoserine). At Lys176 the chain carries N6-acetyllysine. The stretch at 179–233 forms a coiled coil; it reads FWAKAEKEEENRRLEEKRRAEEERQRLEEERRERELQEAARREQRYQEQHRSAGA. Basic and acidic residues-rich tracts occupy residues 185-229 and 264-275; these read KEEE…EQHR and HPREIFKQKERA. The disordered stretch occupies residues 185-341; sequence KEEENRRLEE…AQTEEEPTYE (157 aa). A compositionally biased stretch (polar residues) spans 276 to 286; sequence MSTTSVTSSQP. Residues Ser277, Ser280, Ser283, and Ser291 each carry the phosphoserine modification. The segment covering 294–303 has biased composition (polar residues); it reads LQKQLTQPET. Residue Lys296 is modified to N6-acetyllysine. Thr299 is subject to Phosphothreonine. 2 positions are modified to phosphotyrosine: Tyr340 and Tyr350. Residues 377–436 form the SH3 domain; sequence GQGLCARALYDYQAADDTEISFDPENLITGIEVIDEGWWRGYGPDGHFGMFPANYVELIE.

Belongs to the ABP1 family. Interacts with SHANK3, SYN1 and PRAM1. Interacts with SHANK2. Interacts with FGD1, DNM1 and MAP4K1. Interacts with ANKRD54. Interacts with COBL. Interacts with WASL and WIPF1. In terms of tissue distribution, detected in hippocampus neurons and in the Purkinje cell layer in cerebellum (at protein level). Predominantly expressed in brain, thymus and spleen. Also found in testis, heart and lung. Little or no expression detected in ovary or muscle.

It localises to the cytoplasm. The protein localises to the cytoskeleton. It is found in the cell projection. Its subcellular location is the lamellipodium. The protein resides in the ruffle. It localises to the cell cortex. The protein localises to the cytosol. It is found in the synapse. Its subcellular location is the perikaryon. The protein resides in the neuron projection. It localises to the cell membrane. The protein localises to the cytoplasmic vesicle. It is found in the clathrin-coated vesicle membrane. Its subcellular location is the golgi apparatus membrane. The protein resides in the podosome. It localises to the early endosome. The protein localises to the dendrite. It is found in the postsynaptic density. Adapter protein that binds F-actin and DNM1, and thereby plays a role in receptor-mediated endocytosis. Plays a role in the reorganization of the actin cytoskeleton, formation of cell projections, such as neurites, in neuron morphogenesis and synapse formation via its interaction with WASL and COBL. Does not bind G-actin and promote actin polymerization by itself. Required for the formation of organized podosome rosettes. May act as a common effector of antigen receptor-signaling pathways in leukocytes. Acts as a key component of the immunological synapse that regulates T-cell activation by bridging TCRs and the actin cytoskeleton to gene activation and endocytic processes. This Mus musculus (Mouse) protein is Drebrin-like protein.